The following is a 540-amino-acid chain: Probable metabolite transport protein YFL040W (540 aa).

The Cytoplasmic portion of the chain corresponds to 1-29 (MTAMKAIVWRLPKMPKIKITKTYEVTKIT). Residues 30–50 (AILTLVGFIMGLEVPSLATFL) traverse the membrane as a helical segment. Topologically, residues 51–67 (TNKTFNEYFKYPTPLQQ) are extracellular. Residue Asn-52 is glycosylated (N-linked (GlcNAc...) asparagine). The helical transmembrane segment at 68-88 (GLLMGSTPLGGIMGCFICCIM) threads the bilayer. Residues 89–101 (NDRFSRIYQFQSG) lie on the Cytoplasmic side of the membrane. The chain crosses the membrane as a helical span at residues 102-122 (IIIWNIVTLLNFCIWDILGLL). Residues 123–126 (ICRM) are Extracellular-facing. A helical membrane pass occupies residues 127–147 (IKGMILGNFSILVASYANEVI). The Cytoplasmic segment spans residues 148–158 (PRGKRGSTMSY). The helical transmembrane segment at 159–179 (IQLCLTIGILVMHYLCIALSL) threads the bilayer. The Extracellular portion of the chain corresponds to 180 to 187 (WDSHFAFR). The helical transmembrane segment at 188-208 (IAWCIGIIPGLLFWMASYALP) threads the bilayer. At 209 to 275 (ESYHWLVLHG…KKLPRGSFKP (67 aa)) the chain is on the cytoplasmic side. Residues 276 to 296 (LILGMTLQLLVQFSGINIILG) traverse the membrane as a helical segment. Topologically, residues 297–313 (YITYICEIVGLEGNVKL) are extracellular. A helical transmembrane segment spans residues 314 to 334 (FTSSIPYFINMVLSLLPITFI). Residues 335 to 341 (DYTSRKL) are Cytoplasmic-facing. A helical transmembrane segment spans residues 342–362 (ITLLGGFPISGLLITIGALFV). The Extracellular portion of the chain corresponds to 363-385 (KYGQDTKPIDGNRSLVWSIGENP). N-linked (GlcNAc...) asparagine glycosylation occurs at Asn-374. Residues 386 to 406 (FVGGWILTLCFLIVGIFAMSL) traverse the membrane as a helical segment. Residues 407–428 (SSIPWVYTNEMLPSRVKVKGFA) lie on the Cytoplasmic side of the membrane. Residues 429–449 (ICVTFGWLGNFILTFLCPVMI) form a helical membrane-spanning segment. Topologically, residues 450 to 455 (ERLKGT) are extracellular. The helical transmembrane segment at 456-476 (TFIIFGSLTFLISLSVLIWFP) threads the bilayer. Topologically, residues 477–540 (ETKGMSIEDI…KLKSDEEMII (64 aa)) are cytoplasmic. A disordered region spans residues 499-540 (NLHGEKGIKTPDSNSNGGSTRSSQEGQLHKPIKLKSDEEMII). Residues 509–524 (PDSNSNGGSTRSSQEG) are compositionally biased toward polar residues.

The protein belongs to the major facilitator superfamily. Sugar transporter (TC 2.A.1.1) family.

The protein resides in the membrane. The sequence is that of Probable metabolite transport protein YFL040W from Saccharomyces cerevisiae (strain ATCC 204508 / S288c) (Baker's yeast).